A 535-amino-acid polypeptide reads, in one-letter code: MRLRNGTVATALVFVTSFLTLSWYTTWQNGKEKLIAYQREFLALKERLRVAEHRISQRSSELNTIVQQFRRAGAETNGSKTALSTISDNTIKLLKELTSKKSLRVPSIYYHLPHLLQNERSLQPAVQIGSGRTGVSIVMGIPTVKREVKSYLVETLHSLIDNLYPEEKLDCVIVVFIGETDLDYVHSVVANLEKEFSREISSGLLEIISPPESYYPDLTNLKETFGDSKERVRWRTKQNLDYCFLMMYAQEKGIYYIQLEDDIIVKQNYFNTIKNFALQLSSEEWMILEFSQLGFIGKMFQAPDLALVVEFILMFYKEKPIDWLLDHILWVKVCNPEKDAKHCDRQKANLRIRFRPSLFQHVGLHSSLSGKIQKLTDKDYMKPLLLKVHVNPPAEVSTSLKVYQGHTLEKTYMGEDFFWAITPTAGDYILFKFDKPVNVESYLFHSGNQEHPGDILLNTTVDVLPLKSDSLEISKETKDKRLEDGYFRIGKFEYGVAEGIVDPGLNPISAFRLSVIQNSAVWAILNEIHIKKVTS.

Topologically, residues 1-6 (MRLRNG) are cytoplasmic. A helical; Signal-anchor for type II membrane protein transmembrane segment spans residues 7 to 27 (TVATALVFVTSFLTLSWYTTW). Positions 28–63 (QNGKEKLIAYQREFLALKERLRVAEHRISQRSSELN) form a coiled coil. The Lumenal portion of the chain corresponds to 28-535 (QNGKEKLIAY…NEIHIKKVTS (508 aa)). Asn77 and Asn458 each carry an N-linked (GlcNAc...) asparagine glycan. Ser474 carries the phosphoserine modification.

The protein belongs to the glycosyltransferase 54 family. A divalent metal cation serves as cofactor. Post-translationally, N-glycosylated.

The protein localises to the golgi apparatus membrane. It is found in the secreted. The catalysed reaction is N(4)-{beta-D-GlcNAc-(1-&gt;2)-alpha-D-Man-(1-&gt;3)-[beta-D-GlcNAc-(1-&gt;2)-alpha-D-Man-(1-&gt;6)]-beta-D-Man-(1-&gt;4)-beta-D-GlcNAc-(1-&gt;4)-beta-D-GlcNAc}-L-asparaginyl-[protein] + UDP-N-acetyl-alpha-D-glucosamine = N(4)-{beta-D-GlcNAc-(1-&gt;2)-[beta-D-GlcNAc-(1-&gt;4)]-alpha-D-Man-(1-&gt;3)-[beta-D-GlcNAc-(1-&gt;2)-alpha-D-Man-(1-&gt;6)]-beta-D-Man-(1-&gt;4)-beta-D-GlcNAc-(1-&gt;4)-beta-D-GlcNAc}-L-asparaginyl-[protein] + UDP + H(+). It catalyses the reaction an N(4)-{beta-D-GlcNAc-(1-&gt;2)-alpha-D-Man-(1-&gt;3)-[alpha-D-Man-(1-&gt;6)]-beta-D-Man-(1-&gt;4)-beta-D-GlcNAc-(1-&gt;4)-beta-D-GlcNAc}-L-asparaginyl-[protein] + UDP-N-acetyl-alpha-D-glucosamine = an N(4)-{beta-D-GlcNAc-(1-&gt;2)-[beta-D-GlcNAc-(1-&gt;4)]-alpha-D-Man-(1-&gt;3)-[alpha-D-Man-(1-&gt;6)]-beta-D-Man-(1-&gt;4)-beta-D-GlcNAc-(1-&gt;4)-beta-D-GlcNAc}-L-asparaginyl-[protein] + UDP + H(+). It carries out the reaction an N(4)-{beta-D-GlcNAc-(1-&gt;2)-alpha-D-Man-(1-&gt;3)-[beta-D-GlcNAc-(1-&gt;2)-[beta-D-GlcNAc-(1-&gt;6)]-alpha-D-Man-(1-&gt;6)]-beta-D-Man-(1-&gt;4)-beta-D-GlcNAc-(1-&gt;4)-beta-D-GlcNAc}-L-asparaginyl-[protein] + UDP-N-acetyl-alpha-D-glucosamine = an N(4)-{beta-D-GlcNAc-(1-&gt;2)-[beta-D-GlcNAc-(1-&gt;4)]-alpha-D-Man-(1-&gt;3)-[beta-D-GlcNAc-(1-&gt;2)-[beta-D-GlcNAc-(1-&gt;6)]-alpha-D-Man-(1-&gt;6)]-beta-D-Man-(1-&gt;4)-beta-D-GlcNAc-(1-&gt;4)-beta-D-GlcNAc}-L-asparaginyl-[protein] + UDP + H(+). The enzyme catalyses an N(4)-{beta-D-GlcNAc-(1-&gt;2)-alpha-D-Man-(1-&gt;3)-[beta-D-GlcNAc-(1-&gt;2)-alpha-D-Man-(1-&gt;6)]-beta-D-Man-(1-&gt;4)-beta-D-GlcNAc-(1-&gt;4)-[alpha-L-Fuc-(1-&gt;6)]-beta-D-GlcNAc}-L-asparaginyl-[protein] + UDP-N-acetyl-alpha-D-glucosamine = N(4)-{beta-D-GlcNAc-(1-&gt;2)-[beta-D-GlcNAc-(1-&gt;4)]-alpha-D-Man-(1-&gt;3)-[beta-D-GlcNAc-(1-&gt;2)-alpha-D-Man-(1-&gt;6)]-beta-D-Man-(1-&gt;4)-beta-D-GlcNAc-(1-&gt;4)-[alpha-L-Fuc-(1-&gt;6)]-beta-D-GlcNAc}-asparaginyl-[protein] + UDP + H(+). The catalysed reaction is an N(4)-{beta-D-GlcNAc-(1-&gt;2)-alpha-D-Man-(1-&gt;3)-[beta-D-Gal-(1-&gt;4)-beta-D-GlcNAc-(1-&gt;2)-alpha-D-Man-(1-&gt;6)]-beta-D-Man-(1-&gt;4)-beta-D-GlcNAc-(1-&gt;4)-beta-D-GlcNAc}-L-asparaginyl-[protein] + UDP-N-acetyl-alpha-D-glucosamine = an N(4)-{beta-D-GlcNAc-(1-&gt;2)-[beta-D-GlcNAc-(1-&gt;4)]-alpha-D-Man-(1-&gt;3)-[beta-D-Gal-(1-&gt;4)-beta-D-GlcNAc-(1-&gt;2)-alpha-D-Man-(1-&gt;6)]-beta-D-Man-(1-&gt;4)-beta-D-GlcNAc-(1-&gt;4)-beta-D-GlcNAc}-L-asparaginyl-[protein] + UDP + H(+). It catalyses the reaction N(4)-{beta-D-GlcNAc-(1-&gt;2)-alpha-D-Man-(1-&gt;3)-[alpha-D-Man-(1-&gt;3)-{alpha-D-Man-(1-&gt;6)}-alpha-D-Man-(1-&gt;6)]-beta-D-Man-(1-&gt;4)-beta-D-GlcNAc-(1-&gt;4)-beta-D-GlcNAc}-asparaginyl-[protein] + UDP-N-acetyl-alpha-D-glucosamine = N(4)-{beta-D-GlcNAc-(1-&gt;2)-[beta-D-GlcNAc-(1-&gt;4)]-alpha-D-Man-(1-&gt;3)-[alpha-D-Man-(1-&gt;3)-{alpha-D-Man-(1-&gt;6)}-alpha-D-Man-(1-&gt;6)]-beta-D-Man-(1-&gt;4)-beta-D-GlcNAc-(1-&gt;4)-beta-D-GlcNAc}-asparaginyl-[protein] + UDP + H(+). It carries out the reaction N(4)-{beta-D-GlcNAc-(1-&gt;2)-alpha-D-Man-(1-&gt;3)-beta-D-Man-(1-&gt;4)-beta-D-GlcNAc-(1-&gt;4)-beta-D-GlcNAc}-asparaginyl-[protein] + UDP-N-acetyl-alpha-D-glucosamine = N(4)-{beta-D-GlcNAc-(1-&gt;2)-[beta-D-GlcNAc-(1-&gt;4)]-alpha-D-Man-(1-&gt;3)-beta-D-Man-(1-&gt;4)-beta-D-GlcNAc-(1-&gt;4)-beta-D-GlcNAc}-asparaginyl-[protein] + UDP + H(+). Its pathway is protein modification; protein glycosylation. Inhibited by UDP. In terms of biological role, glycosyltransferase that catalyze the transfer of GlcNAc from UDP-GlcNAc to the GlcNAcbeta1-2Manalpha1-3 arm of the core structure of N-linked glycans through a beta1-4 linkage and participates in the production of tri- and tetra-antennary N-linked sugar chains. Involved in glucose transport by mediating SLC2A2/GLUT2 glycosylation, thereby controlling cell-surface expression of SLC2A2 in pancreatic beta cells. The protein is Alpha-1,3-mannosyl-glycoprotein 4-beta-N-acetylglucosaminyltransferase A of Mus musculus (Mouse).